The primary structure comprises 441 residues: Enolase (441 aa).

Q164 contacts (2R)-2-phosphoglycerate. Residue E206 is the Proton donor of the active site. D243, E289, and D316 together coordinate Mg(2+). 4 residues coordinate (2R)-2-phosphoglycerate: K341, R370, S371, and K392. K341 (proton acceptor) is an active-site residue.

This sequence belongs to the enolase family. Mg(2+) is required as a cofactor.

It is found in the cytoplasm. The protein localises to the secreted. Its subcellular location is the cell surface. The catalysed reaction is (2R)-2-phosphoglycerate = phosphoenolpyruvate + H2O. It participates in carbohydrate degradation; glycolysis; pyruvate from D-glyceraldehyde 3-phosphate: step 4/5. Functionally, catalyzes the reversible conversion of 2-phosphoglycerate (2-PG) into phosphoenolpyruvate (PEP). It is essential for the degradation of carbohydrates via glycolysis. The polypeptide is Enolase (Leuconostoc citreum (strain KM20)).